We begin with the raw amino-acid sequence, 205 residues long: Ribonuclease HII (205 aa).

Residues V16–I205 form the RNase H type-2 domain. 3 residues coordinate a divalent metal cation: D22, E23, and D118.

It belongs to the RNase HII family. It depends on Mn(2+) as a cofactor. Mg(2+) is required as a cofactor.

The protein resides in the cytoplasm. It carries out the reaction Endonucleolytic cleavage to 5'-phosphomonoester.. Endonuclease that specifically degrades the RNA of RNA-DNA hybrids. This is Ribonuclease HII from Prochlorococcus marinus (strain AS9601).